The chain runs to 185 residues: Elongation factor P (185 aa).

It belongs to the elongation factor P family.

The protein localises to the cytoplasm. Its pathway is protein biosynthesis; polypeptide chain elongation. Involved in peptide bond synthesis. Stimulates efficient translation and peptide-bond synthesis on native or reconstituted 70S ribosomes in vitro. Probably functions indirectly by altering the affinity of the ribosome for aminoacyl-tRNA, thus increasing their reactivity as acceptors for peptidyl transferase. The polypeptide is Elongation factor P (Gloeothece citriformis (strain PCC 7424) (Cyanothece sp. (strain PCC 7424))).